A 109-amino-acid chain; its full sequence is Fluoride-specific ion channel FluC 1 (109 aa).

Helical transmembrane passes span Leu21 to Ile41, Ile52 to Tyr72, and Ile84 to Ile104.

This sequence belongs to the fluoride channel Fluc/FEX (TC 1.A.43) family.

Its subcellular location is the cell inner membrane. The catalysed reaction is fluoride(in) = fluoride(out). Its function is as follows. Fluoride-specific ion channel. Important for reducing fluoride concentration in the cell, thus reducing its toxicity. In Prochlorococcus marinus (strain MIT 9312), this protein is Fluoride-specific ion channel FluC 1.